The primary structure comprises 393 residues: Arginine--pyruvate transaminase AruH (393 aa).

At lysine 237 the chain carries N6-(pyridoxal phosphate)lysine.

Belongs to the class-I pyridoxal-phosphate-dependent aminotransferase family. As to quaternary structure, homodimer. The cofactor is pyridoxal 5'-phosphate.

It catalyses the reaction L-arginine + pyruvate = 5-guanidino-2-oxopentanoate + L-alanine. It participates in amino-acid degradation; L-arginine degradation. Functionally, catalyzes the conversion of L-arginine into 2-ketoarginine via transamination. L-arginine is the best substrate, but it can also use L-lysine, L-methionine, L-leucine, ornithine and L-glutamine, which indicates that it may have a broader physiological function in amino acid catabolism. The protein is Arginine--pyruvate transaminase AruH (aruH) of Pseudomonas aeruginosa (strain ATCC 15692 / DSM 22644 / CIP 104116 / JCM 14847 / LMG 12228 / 1C / PRS 101 / PAO1).